The following is a 198-amino-acid chain: Nucleoid occlusion factor SlmA (198 aa).

The 62-residue stretch at 9-70 (RNRREEILQA…SLIEFIEDSL (62 aa)) folds into the HTH tetR-type domain. The segment at residues 33 to 52 (TTAKLAANVGVSEAALYRHF) is a DNA-binding region (H-T-H motif). A coiled-coil region spans residues 119-144 (DRLQGRINQLYERIEVQLRQVLRERK).

This sequence belongs to the nucleoid occlusion factor SlmA family. As to quaternary structure, homodimer. Interacts with FtsZ.

It is found in the cytoplasm. Its subcellular location is the nucleoid. Its function is as follows. Required for nucleoid occlusion (NO) phenomenon, which prevents Z-ring formation and cell division over the nucleoid. Acts as a DNA-associated cell division inhibitor that binds simultaneously chromosomal DNA and FtsZ, and disrupts the assembly of FtsZ polymers. SlmA-DNA-binding sequences (SBS) are dispersed on non-Ter regions of the chromosome, preventing FtsZ polymerization at these regions. This chain is Nucleoid occlusion factor SlmA, found in Sodalis glossinidius (strain morsitans).